The primary structure comprises 589 residues: Ectoderm-neural cortex protein 1 (589 aa).

Residues T46–E114 enclose the BTB domain. 6 Kelch repeats span residues A296–C340, K341–H388, C389–L444, L446–N492, I494–N538, and K539–K585.

In terms of assembly, binds to RB1. Hypophosphorylated RB1 associates with ENC1 during neuronal differentiation, while hyperphosphorylated RB1 associates with ENC1 in undifferentiating cells. Part of a complex that contains CUL3, RBX1 and ENC1. Interacts indirectly with KEAP1. Post-translationally, ubiquitinated by E3 ubiquitin ligase complex formed by CUL3 and RBX1 and probably targeted for proteasome-independent degradation. Quinone-induced oxidative stress increases its ubiquitination. As to expression, primarily expressed in the nervous system.

Its subcellular location is the nucleus matrix. The protein localises to the cytoplasm. It is found in the cytoskeleton. Its function is as follows. Actin-binding protein involved in the regulation of neuronal process formation and in differentiation of neural crest cells. Down-regulates transcription factor NF2L2/NRF2 by decreasing the rate of protein synthesis and not via a ubiquitin-mediated proteasomal degradation mechanism. This chain is Ectoderm-neural cortex protein 1 (Enc1), found in Mus musculus (Mouse).